The chain runs to 144 residues: Na(+)/H(+) antiporter subunit B (144 aa).

The next 4 membrane-spanning stretches (helical) occupy residues 9-31 (VLLH…YLFF), 41-58 (FIGG…YLGF), 75-97 (IAFG…DPYL), and 117-139 (ALPF…ILTI).

The protein belongs to the CPA3 antiporters (TC 2.A.63) subunit B family. Forms a heterooligomeric complex that consists of seven subunits: MrpA, MrpB, MrpC, MrpD, MrpE, MrpF and MrpG.

The protein localises to the cell membrane. Functionally, mnh complex is a Na(+)Li(+)/H(+) antiporter involved in Na(+) and/or Li(+) excretion and Na(+) resistance. Na(+)/H(+) antiport consumes a transmembrane electrical potential, and is thus inferred to be electrogenic. Does not transport K(+), Ca(2+) or Mg(2+). This is Na(+)/H(+) antiporter subunit B (mrpB) from Alkalihalophilus pseudofirmus (strain ATCC BAA-2126 / JCM 17055 / OF4) (Bacillus pseudofirmus).